We begin with the raw amino-acid sequence, 514 residues long: Serine--tRNA ligase, cytoplasmic (514 aa).

Met1 is modified (N-acetylmethionine). The tract at residues 9-61 (RVDKGGDPALIRETQEKRFKDPGLVDQLVKADSEWRRCRFRADNLNKLKNLCS) is interaction with tRNA. Position 241 is a phosphoserine (Ser241). Positions 271 and 302 each coordinate L-serine. ATP contacts are provided by residues 302 to 304 (RQE) and 318 to 321 (VHQF). Residue Lys323 is modified to N6-acetyllysine. Residue Glu325 participates in L-serine binding. 391–394 (ELVS) serves as a coordination point for ATP. Asn427 contacts L-serine. Residues 471-514 (VKPAPIDQEPSKKQKKQHEGSKKKAAARDVALESRLQNMEVTDA) are disordered. The segment covering 479–502 (EPSKKQKKQHEGSKKKAAARDVAL) has biased composition (basic and acidic residues). The Nuclear localization signal signature appears at 482–494 (KKQKKQHEGSKKK). Residues 505–514 (RLQNMEVTDA) show a composition bias toward polar residues.

It belongs to the class-II aminoacyl-tRNA synthetase family. Type-1 seryl-tRNA synthetase subfamily. Homodimer. The tRNA molecule may bind across the dimer. Interacts with SIRT2. Interacts with METTL6; interaction is required for the tRNA N(3)-methylcytidine methyltransferase activity of METTL6.

It is found in the cytoplasm. The protein resides in the nucleus. The enzyme catalyses tRNA(Ser) + L-serine + ATP = L-seryl-tRNA(Ser) + AMP + diphosphate + H(+). The catalysed reaction is tRNA(Sec) + L-serine + ATP = L-seryl-tRNA(Sec) + AMP + diphosphate + H(+). The protein operates within aminoacyl-tRNA biosynthesis; selenocysteinyl-tRNA(Sec) biosynthesis; L-seryl-tRNA(Sec) from L-serine and tRNA(Sec): step 1/1. Catalyzes the attachment of serine to tRNA(Ser) in a two-step reaction: serine is first activated by ATP to form Ser-AMP and then transferred to the acceptor end of tRNA(Ser). Is probably also able to aminoacylate tRNA(Sec) with serine, to form the misacylated tRNA L-seryl-tRNA(Sec), which will be further converted into selenocysteinyl-tRNA(Sec). In the nucleus, binds to the VEGFA core promoter and prevents MYC binding and transcriptional activation by MYC. Recruits SIRT2 to the VEGFA promoter, promoting deacetylation of histone H4 at 'Lys-16' (H4K16). Thereby, inhibits the production of VEGFA and sprouting angiogenesis mediated by VEGFA. The sequence is that of Serine--tRNA ligase, cytoplasmic (SARS1) from Macaca fascicularis (Crab-eating macaque).